A 283-amino-acid chain; its full sequence is Acetylglutamate kinase (283 aa).

Substrate is bound by residues 63–64 (GG), R85, and N179.

The protein belongs to the acetylglutamate kinase family. ArgB subfamily.

The protein localises to the cytoplasm. It catalyses the reaction N-acetyl-L-glutamate + ATP = N-acetyl-L-glutamyl 5-phosphate + ADP. It participates in amino-acid biosynthesis; L-arginine biosynthesis; N(2)-acetyl-L-ornithine from L-glutamate: step 2/4. Its function is as follows. Catalyzes the ATP-dependent phosphorylation of N-acetyl-L-glutamate. This Clostridium kluyveri (strain NBRC 12016) protein is Acetylglutamate kinase.